The following is a 114-amino-acid chain: U-myrmeciitoxin(01)-Mg8a (114 aa).

Positions 1-20 (MKLSTLLVAFVLLVITVILS) are cleaved as a signal peptide. Residues 21–44 (TPSTNAKALAESNALAVAVSEAEP) constitute a propeptide that is removed on maturation.

It belongs to the formicidae venom precursor-01 superfamily. In terms of tissue distribution, expressed by the venom gland.

It is found in the secreted. Its function is as follows. May have antimicrobial properties, like most ant linear peptides. In Myrmecia gulosa (Red bulldog ant), this protein is U-myrmeciitoxin(01)-Mg8a.